The primary structure comprises 309 residues: Short-chain dehydrogenase/reductase ARMGADRAFT_1018437 (309 aa).

Residues K64, D86, and N113 each contribute to the NADP(+) site. Residue S167 is the Proton donor of the active site. NADP(+) is bound by residues Y196 and K200. Y196 acts as the Proton acceptor in catalysis. The active-site Lowers pKa of active site Tyr is the K200.

Belongs to the short-chain dehydrogenases/reductases (SDR) family.

Its pathway is secondary metabolite biosynthesis. Short-chain dehydrogenase/reductase, part of the gene cluster that mediates the biosynthesis of melleolides, a range of antifungal and phytotoxic polyketide derivatives composed of an orsellinic acid (OA) moiety esterified to various sesquiterpene alcohols. The first step in melleolides biosynthesis is performed by the delta(6)-protoilludene synthase PRO1 which catalyzes the cyclization of farnesyl diphosphate to protoilludene. The orsellinic acid synthase armB produces OA by condensing acetyl-CoA with 3 malonyl-CoA units in a three-round chain elongation reaction folowed by a C2-C7 ring closure. ArmB further catalyzes the trans-esterification of OA to the various sesquiterpene alcohols resulting from the hydroxylation of protoilludene. The melleolides cluster also includes 5 cytochrome P450 monooxygenases, 4 NAD(+)-dependent oxidoreductases, one flavin-dependent oxidoreductase, and one O-methyltransferase. The cytochrome P450 monooxygenases may be involved in protoilludene hydroxylation to elaborate melleolides with multiple alcohol groups, such as melleolide D, which carries alcohol functionalities at C-4, C-5, C-10, and C-13. The role of the NAD(+)-dependent enzymes remains unknown. Numerous melleolides, including arnamial, show 5'-O-methylation of the aromatic moiety which may be catalyzed by the methyltransferase encoded in the cluster. The flavin-dependent oxidoreductase might represent the dehydrogenase yielding the aldehyde in position 1 of arnamial and other melleolides. Finally, several halogenase localized outside of the cluster, are able to catalyze the transfer of a single chlorine atom to the melleolide backbone, resulting in a 6'-chloromelleolide product. This chain is Short-chain dehydrogenase/reductase ARMGADRAFT_1018437, found in Armillaria gallica (Bulbous honey fungus).